Here is a 47-residue protein sequence, read N- to C-terminus: PhoP/PhoQ regulator MgrB (47 aa).

The chain crosses the membrane as a helical span at residues 6-26 (WVVLVVVVLACLLLWAQVFNM).

Belongs to the MgrB family. May form homooligomers. Probably interacts with the periplasmic domain of PhoQ.

It localises to the cell inner membrane. PhoP-regulated transcription is redox-sensitive, being activated when the periplasm becomes more reducing. MgrB acts between DsbA/DsbB and PhoP/PhoQ in this pathway. Represses PhoP/PhoQ signaling, possibly by binding to the periplasmic domain of PhoQ, altering its activity and that of downstream effector PhoP. The chain is PhoP/PhoQ regulator MgrB from Escherichia coli O157:H7.